An 896-amino-acid chain; its full sequence is Valine--tRNA ligase (896 aa).

The 'HIGH' region signature appears at 43–53; that stretch reads PNVTGSLHIGH. Residues 545-549 carry the 'KMSKS' region motif; sequence KMSKS. Lysine 548 lines the ATP pocket. Residues 831–857 are a coiled coil; that stretch reads DLDAERARLAKGIAAAEKERDGLAARL.

Belongs to the class-I aminoacyl-tRNA synthetase family. ValS type 1 subfamily. In terms of assembly, monomer.

It is found in the cytoplasm. The catalysed reaction is tRNA(Val) + L-valine + ATP = L-valyl-tRNA(Val) + AMP + diphosphate. Catalyzes the attachment of valine to tRNA(Val). As ValRS can inadvertently accommodate and process structurally similar amino acids such as threonine, to avoid such errors, it has a 'posttransfer' editing activity that hydrolyzes mischarged Thr-tRNA(Val) in a tRNA-dependent manner. The sequence is that of Valine--tRNA ligase from Rhizorhabdus wittichii (strain DSM 6014 / CCUG 31198 / JCM 15750 / NBRC 105917 / EY 4224 / RW1) (Sphingomonas wittichii).